The following is a 375-amino-acid chain: Chaperone protein DnaJ (375 aa).

Residues 5 to 70 (DYYEVLEISR…QKRQAYDRFG (66 aa)) form the J domain. Residues 133 to 211 (GKEVTIQIPS…CHGHGRVRRN (79 aa)) form a CR-type zinc finger. The Zn(2+) site is built by Cys-146, Cys-149, Cys-163, Cys-166, Cys-185, Cys-188, Cys-199, and Cys-202. CXXCXGXG motif repeat units follow at residues 146 to 153 (CEVCRGSG), 163 to 170 (CATCGGRG), 185 to 192 (CPQCNGSG), and 199 to 206 (CTNCHGHG).

The protein belongs to the DnaJ family. As to quaternary structure, homodimer. Requires Zn(2+) as cofactor.

It localises to the cytoplasm. Participates actively in the response to hyperosmotic and heat shock by preventing the aggregation of stress-denatured proteins and by disaggregating proteins, also in an autonomous, DnaK-independent fashion. Unfolded proteins bind initially to DnaJ; upon interaction with the DnaJ-bound protein, DnaK hydrolyzes its bound ATP, resulting in the formation of a stable complex. GrpE releases ADP from DnaK; ATP binding to DnaK triggers the release of the substrate protein, thus completing the reaction cycle. Several rounds of ATP-dependent interactions between DnaJ, DnaK and GrpE are required for fully efficient folding. Also involved, together with DnaK and GrpE, in the DNA replication of plasmids through activation of initiation proteins. The chain is Chaperone protein DnaJ from Acidithiobacillus ferrooxidans (strain ATCC 23270 / DSM 14882 / CIP 104768 / NCIMB 8455) (Ferrobacillus ferrooxidans (strain ATCC 23270)).